We begin with the raw amino-acid sequence, 576 residues long: Lipoprotein LpqB (576 aa).

The N-terminal stretch at 1–16 (MRRVTRTIAAAGAAIA) is a signal peptide. Residue Cys17 is the site of N-palmitoyl cysteine attachment. Cys17 carries the S-diacylglycerol cysteine lipid modification.

Belongs to the LpqB lipoprotein family.

The protein localises to the cell membrane. The chain is Lipoprotein LpqB from Bifidobacterium longum (strain NCC 2705).